The following is a 595-amino-acid chain: Glutamyl-tRNA(Gln) amidotransferase subunit B, mitochondrial (595 aa).

A mitochondrion-targeting transit peptide spans 1 to 114 (MPRLWYSRYL…RAPTSTVAEP (114 aa)). The segment at 59–78 (KEEAKRSKSQSRNGRGKKQV) is disordered.

It belongs to the GatB/GatE family. GatB subfamily. As to quaternary structure, subunit of the heterotrimeric GatCAB amidotransferase (AdT) complex, composed of A, B and C subunits.

Its subcellular location is the mitochondrion. It catalyses the reaction L-glutamyl-tRNA(Gln) + L-glutamine + ATP + H2O = L-glutaminyl-tRNA(Gln) + L-glutamate + ADP + phosphate + H(+). Functionally, allows the formation of correctly charged Gln-tRNA(Gln) through the transamidation of misacylated Glu-tRNA(Gln) in the mitochondria. The reaction takes place in the presence of glutamine and ATP through an activated gamma-phospho-Glu-tRNA(Gln). In Talaromyces stipitatus (strain ATCC 10500 / CBS 375.48 / QM 6759 / NRRL 1006) (Penicillium stipitatum), this protein is Glutamyl-tRNA(Gln) amidotransferase subunit B, mitochondrial.